The sequence spans 134 residues: Complexin-2 (134 aa).

A disordered region spans residues 1–114; the sequence is MDFVMKQALG…CGDEEEEEEE (114 aa). Basic and acidic residues predominate over residues 15 to 85; sequence DMGKMLGGEE…EEKEAEEKAA (71 aa). Positions 28-84 form a coiled coil; it reads PDAQKKEEERQEALRQQEEERKAKHARMEAEREKVRQQIRDKYGLKKKEEKEAEEKA. Residues 41 to 97 are interaction with the SNARE complex; it reads LRQQEEERKAKHARMEAEREKVRQQIRDKYGLKKKEEKEAEEKAALEQPCEGSLTRP. Serine 93 is modified (phosphoserine).

The protein belongs to the complexin/synaphin family. In terms of assembly, binds to the SNARE core complex containing SNAP25, VAMP2 and STX1A. In terms of tissue distribution, nervous system. Also present in adrenal chromaffin cells (at protein level).

Its subcellular location is the cytoplasm. The protein resides in the cytosol. The protein localises to the presynapse. It localises to the nucleus. It is found in the perikaryon. Its function is as follows. Negatively regulates the formation of synaptic vesicle clustering at active zone to the presynaptic membrane in postmitotic neurons. Positively regulates a late step in exocytosis of various cytoplasmic vesicles, such as synaptic vesicles and other secretory vesicles. Also involved in mast cell exocytosis. The polypeptide is Complexin-2 (CPLX2) (Bos taurus (Bovine)).